A 335-amino-acid polypeptide reads, in one-letter code: uncharacterized protein (335 aa).

The segment at 201–236 (GPMAKNKARRKEDNYDTHNCDDANQDKKEEAEGKNT) is disordered. Residues 210–235 (RKEDNYDTHNCDDANQDKKEEAEGKN) show a composition bias toward basic and acidic residues.

Its function is as follows. Dispensable for normal development and fertility. This is an uncharacterized protein from Homo sapiens (Human).